A 125-amino-acid chain; its full sequence is Large ribosomal subunit protein bL12 (125 aa).

It belongs to the bacterial ribosomal protein bL12 family. As to quaternary structure, homodimer. Part of the ribosomal stalk of the 50S ribosomal subunit. Forms a multimeric L10(L12)X complex, where L10 forms an elongated spine to which 2 to 4 L12 dimers bind in a sequential fashion. Binds GTP-bound translation factors.

Functionally, forms part of the ribosomal stalk which helps the ribosome interact with GTP-bound translation factors. Is thus essential for accurate translation. The chain is Large ribosomal subunit protein bL12 from Ruegeria sp. (strain TM1040) (Silicibacter sp.).